The primary structure comprises 147 residues: MTKKTKPESYAFSQNFPISADKARRVIDRIRGRSYEETLIILELLPYRAAYPILKFVCFAASNASSTSTSKKENLFISKAEVNERPAIKKLKPRARGRSFPIKKATCHITIVLTDLSFYFNELVEPQQEKNLLTKLYLNLRGLWDKK.

This sequence belongs to the universal ribosomal protein uL22 family. In terms of assembly, part of the 50S ribosomal subunit.

The protein resides in the plastid. Its function is as follows. This protein binds specifically to 23S rRNA. In terms of biological role, the globular domain of the protein is located near the polypeptide exit tunnel on the outside of the subunit, while an extended beta-hairpin is found that lines the wall of the exit tunnel in the center of the 70S ribosome. This Cuscuta obtusiflora (Peruvian dodder) protein is Large ribosomal subunit protein uL22c (rpl22).